Here is a 66-residue protein sequence, read N- to C-terminus: MAKGKDVRVTIILECTNCVRNDIKKESPGISRYITQKNRHNTPSRLELRKFCPYCYKHTIHGEIKK.

This sequence belongs to the bacterial ribosomal protein bL33 family.

It is found in the plastid. It localises to the chloroplast. The sequence is that of Large ribosomal subunit protein bL33c from Aethionema grandiflorum (Persian stone-cress).